Consider the following 257-residue polypeptide: MSLLSKTRELNTLLQKHKGIAVDFKDVAQTISNVTVTNVFIVSRRGKILGSCLNELLKSERIKDMLEDRHIPREYTEELMNVKQTESNIDIDNELTVFPPENREVFLNSRTTIFPILGGGERLGTLVLGRVQDDFNENDLVLGEYAATVIGMEILREKHNEVEKEARDKAAITMAINSLSYSEKEAIEHIFEELGGTEGLLIASKVADRVGITRSVIVNALRKLESAGVIESRSLGMKGTFIKVKKDKFLDELEKNK.

Residues 1–155 (MSLLSKTREL…AATVIGMEIL (155 aa)) form a GAF domain region. Positions 203–222 (ASKVADRVGITRSVIVNALR) form a DNA-binding region, H-T-H motif.

The protein belongs to the CodY family.

Its subcellular location is the cytoplasm. Functionally, DNA-binding global transcriptional regulator which is involved in the adaptive response to starvation and acts by directly or indirectly controlling the expression of numerous genes in response to nutrient availability. During rapid exponential growth, CodY is highly active and represses genes whose products allow adaptation to nutrient depletion. In Staphylococcus epidermidis (strain ATCC 12228 / FDA PCI 1200), this protein is Global transcriptional regulator CodY.